A 449-amino-acid chain; its full sequence is N-succinylarginine dihydrolase (449 aa).

Substrate is bound by residues 19–28, Asn-110, and 137–138; these read GGLSYGNVAS and HR. A disordered region spans residues 23-43; the sequence is YGNVASQSNSQQGSNPREAAR. Polar residues predominate over residues 25–37; it reads NVASQSNSQQGSN. Glu-174 is an active-site residue. Arg-214 contributes to the substrate binding site. His-250 is a catalytic residue. Substrate contacts are provided by Asp-252 and Asn-365. The Nucleophile role is filled by Cys-371.

This sequence belongs to the succinylarginine dihydrolase family. As to quaternary structure, homodimer.

It carries out the reaction N(2)-succinyl-L-arginine + 2 H2O + 2 H(+) = N(2)-succinyl-L-ornithine + 2 NH4(+) + CO2. It participates in amino-acid degradation; L-arginine degradation via AST pathway; L-glutamate and succinate from L-arginine: step 2/5. Its function is as follows. Catalyzes the hydrolysis of N(2)-succinylarginine into N(2)-succinylornithine, ammonia and CO(2). The sequence is that of N-succinylarginine dihydrolase from Pseudomonas entomophila (strain L48).